Consider the following 464-residue polypeptide: Putative dipeptidase CPC735_014430 (464 aa).

Residues Met1–Arg34 form a disordered region. The chain crosses the membrane as a helical span at residues Gly40 to Ser56. The Zn(2+) site is built by His93, Asp95, and Glu206. Cys145 and Cys235 form a disulfide bridge. His233 contacts substrate. Zn(2+) contacts are provided by His277 and His298. 2 residues coordinate substrate: Arg309 and Asp369. The N-linked (GlcNAc...) asparagine glycan is linked to Asn382.

The protein belongs to the metallo-dependent hydrolases superfamily. Peptidase M19 family. Requires Zn(2+) as cofactor.

It localises to the membrane. The catalysed reaction is an L-aminoacyl-L-amino acid + H2O = 2 an L-alpha-amino acid. Hydrolyzes a wide range of dipeptides. In Coccidioides posadasii (strain C735) (Valley fever fungus), this protein is Putative dipeptidase CPC735_014430.